A 579-amino-acid polypeptide reads, in one-letter code: YTH domain-containing family protein 2 (579 aa).

Residues 1–45 are disordered; it reads MSASSLLEQRPKGQGNKVQNGSVHQKDGLNDDDFEPYLSPQARPN. The residue at position 2 (Ser-2) is an N-acetylserine. Phosphoserine is present on residues Ser-2, Ser-4, Ser-5, Ser-22, Ser-39, and Ser-196. Residues 2-384 are localization to mRNA processing bodies (P-bodies); that stretch reads SASSLLEQRP…QAGSGSTPSE (383 aa). The segment at 247 to 387 is disordered; it reads AKQQPKLKTK…SGSTPSEPHP (141 aa). Over residues 291–316 the composition is skewed to polar residues; it reads ALVQNIGQPTQGSPQPVGQQANNSPP. Low complexity predominate over residues 337-349; sequence AQLSVQQQAAQPT. Ser-359 bears the Phosphoserine mark. The span at 359–371 shows a compositional bias: gly residues; that stretch reads SGFGHNGVDGNGV. A compositionally biased stretch (polar residues) spans 372-383; it reads GQSQAGSGSTPS. An interaction with m6A-containing mRNAs region spans residues 385–579; sequence PHPVLEKLRS…VKKERQGRGK (195 aa). Ser-394 carries the phosphoserine modification. The YTH domain maps to 410 to 544; that stretch reads GRVFIIKSYS…EKAKQVLKII (135 aa). Residues 416-418, Asp-422, 432-433, Asn-462, Trp-486, and Trp-491 contribute to the RNA site; these read KSY and WC.

Belongs to the YTHDF family. YTHDF2 subfamily. As to quaternary structure, interacts with CNOT1; interaction is direct and promotes recruitment of the CCR4-NOT complex. Interacts with YTHDF3. Interacts with RIDA/HRSP12; interaction leads to recruitment of the ribonuclease P/MRP complex. In terms of processing, ubiquitinated by the SCF(SKP2) complex, leading to its degradation. In terms of tissue distribution, widely expressed, with highest expression in testis.

It localises to the cytoplasm. The protein resides in the cytosol. It is found in the P-body. The protein localises to the stress granule. Its subcellular location is the nucleus. Its function is as follows. Specifically recognizes and binds N6-methyladenosine (m6A)-containing RNAs, and regulates their stability. M6A is a modification present at internal sites of mRNAs and some non-coding RNAs and plays a role in mRNA stability and processing. Acts as a regulator of mRNA stability by promoting degradation of m6A-containing mRNAs via interaction with the CCR4-NOT and ribonuclease P/MRP complexes, depending on the context. The YTHDF paralogs (YTHDF1, YTHDF2 and YTHDF3) share m6A-containing mRNAs targets and act redundantly to mediate mRNA degradation and cellular differentiation. M6A-containing mRNAs containing a binding site for RIDA/HRSP12 (5'-GGUUC-3') are preferentially degraded by endoribonucleolytic cleavage: cooperative binding of RIDA/HRSP12 and YTHDF2 to transcripts leads to recruitment of the ribonuclease P/MRP complex. Other m6A-containing mRNAs undergo deadenylation via direct interaction between YTHDF2 and CNOT1, leading to recruitment of the CCR4-NOT and subsequent deadenylation of m6A-containing mRNAs. Required maternally to regulate oocyte maturation: probably acts by binding to m6A-containing mRNAs, thereby regulating maternal transcript dosage during oocyte maturation, which is essential for the competence of oocytes to sustain early zygotic development. Also required during spermatogenesis: regulates spermagonial adhesion by promoting degradation of m6A-containing transcripts coding for matrix metallopeptidases. Also involved in hematopoietic stem cells specification by binding to m6A-containing mRNAs, leading to promote their degradation. Also acts as a regulator of neural development by promoting m6A-dependent degradation of neural development-related mRNA targets. Inhibits neural specification of induced pluripotent stem cells by binding to methylated neural-specific mRNAs and promoting their degradation, thereby restraining neural differentiation. Regulates circadian regulation of hepatic lipid metabolism: acts by promoting m6A-dependent degradation of PPARA transcripts. Regulates the innate immune response to infection by inhibiting the type I interferon response: acts by binding to m6A-containing IFNB transcripts and promoting their degradation. May also act as a promoter of cap-independent mRNA translation following heat shock stress: upon stress, relocalizes to the nucleus and specifically binds mRNAs with some m6A methylation mark at their 5'-UTR, protecting demethylation of mRNAs by FTO, thereby promoting cap-independent mRNA translation. Regulates mitotic entry by promoting the phase-specific m6A-dependent degradation of WEE1 transcripts. Promotes formation of phase-separated membraneless compartments, such as P-bodies or stress granules, by undergoing liquid-liquid phase separation upon binding to mRNAs containing multiple m6A-modified residues: polymethylated mRNAs act as a multivalent scaffold for the binding of YTHDF proteins, juxtaposing their disordered regions and thereby leading to phase separation. The resulting mRNA-YTHDF complexes then partition into different endogenous phase-separated membraneless compartments, such as P-bodies, stress granules or neuronal RNA granules. May also recognize and bind RNAs modified by C5-methylcytosine (m5C) and act as a regulator of rRNA processing. This Mus musculus (Mouse) protein is YTH domain-containing family protein 2.